A 156-amino-acid chain; its full sequence is Small ribosomal subunit protein uS7 (156 aa).

Belongs to the universal ribosomal protein uS7 family. In terms of assembly, part of the 30S ribosomal subunit. Contacts proteins S9 and S11.

In terms of biological role, one of the primary rRNA binding proteins, it binds directly to 16S rRNA where it nucleates assembly of the head domain of the 30S subunit. Is located at the subunit interface close to the decoding center, probably blocks exit of the E-site tRNA. The sequence is that of Small ribosomal subunit protein uS7 from Citrobacter koseri (strain ATCC BAA-895 / CDC 4225-83 / SGSC4696).